The sequence spans 214 residues: uncharacterized protein (214 aa).

2 helical membrane-spanning segments follow: residues 23–43 (ILVG…VAAA) and 65–85 (VLYA…PVLL). The tract at residues 96-115 (ATRPTGASVRGGRSIGSGHP) is disordered. 2 consecutive transmembrane segments (helical) span residues 152-172 (VVLT…TYLM) and 181-201 (WISY…EWLY).

It is found in the cell membrane. This is an uncharacterized protein from Mycobacterium tuberculosis (strain CDC 1551 / Oshkosh).